The following is a 366-amino-acid chain: Aminomethyltransferase (366 aa).

Belongs to the GcvT family. In terms of assembly, the glycine cleavage system is composed of four proteins: P, T, L and H.

The catalysed reaction is N(6)-[(R)-S(8)-aminomethyldihydrolipoyl]-L-lysyl-[protein] + (6S)-5,6,7,8-tetrahydrofolate = N(6)-[(R)-dihydrolipoyl]-L-lysyl-[protein] + (6R)-5,10-methylene-5,6,7,8-tetrahydrofolate + NH4(+). Functionally, the glycine cleavage system catalyzes the degradation of glycine. This chain is Aminomethyltransferase, found in Thermosynechococcus vestitus (strain NIES-2133 / IAM M-273 / BP-1).